A 463-amino-acid polypeptide reads, in one-letter code: L-seryl-tRNA(Sec) selenium transferase (463 aa).

The residue at position 295 (Lys-295) is an N6-(pyridoxal phosphate)lysine.

Belongs to the SelA family. Homodecamer; pentamer of dimers. Binds only one seryl-tRNA(Sec) per dimer. Pyridoxal 5'-phosphate is required as a cofactor.

The protein resides in the cytoplasm. The catalysed reaction is L-seryl-tRNA(Sec) + selenophosphate + H(+) = L-selenocysteinyl-tRNA(Sec) + phosphate. The protein operates within aminoacyl-tRNA biosynthesis; selenocysteinyl-tRNA(Sec) biosynthesis; selenocysteinyl-tRNA(Sec) from L-seryl-tRNA(Sec) (bacterial route): step 1/1. Its function is as follows. Converts seryl-tRNA(Sec) to selenocysteinyl-tRNA(Sec) required for selenoprotein biosynthesis. This is L-seryl-tRNA(Sec) selenium transferase from Escherichia coli (strain SMS-3-5 / SECEC).